Reading from the N-terminus, the 443-residue chain is Transcriptional adapter 2-alpha (443 aa).

Residue S6 is modified to Phosphoserine. The segment at 12-69 adopts a ZZ-type zinc-finger fold; sequence SDKPPCRGCSSYLMEPYIKCAECGPPPFFLCLQCFTRGFEYKKHQSDHTYEIMTSDFP. C17, C20, C31, C34, C42, C45, H55, and H59 together coordinate Zn(2+). The 53-residue stretch at 70 to 122 folds into the SANT domain; the sequence is VLDPSWTAQEEMALLEAVMDCGFGNWQDVANQMCTKTKEECEKHYMKHFINNP. Residues K132 and K138 each participate in a glycyl lysine isopeptide (Lys-Gly) (interchain with G-Cter in SUMO2) cross-link. Positions 356-443 constitute an SWIRM domain; it reads NSGRRSAPPL…LIREGYITKA (88 aa). The DNA-binding element occupies 426–435; sequence KTRKIYDFLI.

As to quaternary structure, interacts with GCN5 and NR3C1. Associated with the P/CAF protein in the PCAF complex. Component of the PCAF complex, at least composed of TADA2L/ADA2, TADA3L/ADA3, TAF5L/PAF65-beta, TAF6L/PAF65-alpha, TAF10/TAFII30, TAF12/TAFII20, TAF9/TAFII31 and TRRAP. Component of the ADA2A-containing complex (ATAC), composed of KAT14, KAT2A, TADA2L, TADA3L, ZZ3, MBIP, WDR5, YEATS2, CCDC101 and DR1. Interacts with CCDC134.

Its subcellular location is the nucleus. It is found in the chromosome. Component of the ATAC complex, a complex with histone acetyltransferase activity on histones H3 and H4. Required for the function of some acidic activation domains, which activate transcription from a distant site. Binds double-stranded DNA. Binds dinucleosomes, probably at the linker region between neighboring nucleosomes. Plays a role in chromatin remodeling. May promote TP53/p53 'Lys-321' acetylation, leading to reduced TP53 stability and transcriptional activity. May also promote XRCC6 acetylation thus facilitating cell apoptosis in response to DNA damage. The sequence is that of Transcriptional adapter 2-alpha (Tada2a) from Rattus norvegicus (Rat).